Consider the following 142-residue polypeptide: ATP synthase epsilon chain (142 aa).

This sequence belongs to the ATPase epsilon chain family. In terms of assembly, F-type ATPases have 2 components, CF(1) - the catalytic core - and CF(0) - the membrane proton channel. CF(1) has five subunits: alpha(3), beta(3), gamma(1), delta(1), epsilon(1). CF(0) has three main subunits: a, b and c.

The protein resides in the cell inner membrane. In terms of biological role, produces ATP from ADP in the presence of a proton gradient across the membrane. This chain is ATP synthase epsilon chain, found in Histophilus somni (strain 129Pt) (Haemophilus somnus).